The chain runs to 660 residues: DNA mismatch repair protein MutL (660 aa).

Belongs to the DNA mismatch repair MutL/HexB family.

Functionally, this protein is involved in the repair of mismatches in DNA. It is required for dam-dependent methyl-directed DNA mismatch repair. May act as a 'molecular matchmaker', a protein that promotes the formation of a stable complex between two or more DNA-binding proteins in an ATP-dependent manner without itself being part of a final effector complex. The chain is DNA mismatch repair protein MutL from Streptococcus equi subsp. equi (strain 4047).